The sequence spans 212 residues: MKQYQKDFVDFMLGSGALKFGEFTLKSGRVSPYFFNTGAFNTGQHLSQLGKFYATAIENSILDFDVLFGLAYKGIPLVTATTIALNDGFSKNVPYSFNRKEVKIHGEGGDIVGHQLEGNILIIDDVITVGTAIIEAMSIIKANGATAKGVIVAVDRQEKGKGEQSTIQEVEQNFGLSVLSIINLSHLVDYLKQGNDHALIERIEVYRDCYGV.

K26 contributes to the 5-phospho-alpha-D-ribose 1-diphosphate binding site. Residue 34–35 coordinates orotate; sequence FF. Residues 72–73, R99, K100, K103, H105, and 124–132 each bind 5-phospho-alpha-D-ribose 1-diphosphate; these read YK and DDVITVGTA. Orotate contacts are provided by T128 and R156.

Belongs to the purine/pyrimidine phosphoribosyltransferase family. PyrE subfamily. In terms of assembly, homodimer. Mg(2+) serves as cofactor.

The catalysed reaction is orotidine 5'-phosphate + diphosphate = orotate + 5-phospho-alpha-D-ribose 1-diphosphate. It functions in the pathway pyrimidine metabolism; UMP biosynthesis via de novo pathway; UMP from orotate: step 1/2. Functionally, catalyzes the transfer of a ribosyl phosphate group from 5-phosphoribose 1-diphosphate to orotate, leading to the formation of orotidine monophosphate (OMP). This chain is Orotate phosphoribosyltransferase, found in Ruthia magnifica subsp. Calyptogena magnifica.